We begin with the raw amino-acid sequence, 402 residues long: Adenylyltransferase and sulfurtransferase MOCS3 (402 aa).

Residues glycine 47, aspartate 68, aspartate 75–arginine 79, lysine 92, and aspartate 136–asparagine 137 contribute to the ATP site. Zn(2+) is bound by residues cysteine 178 and cysteine 181. Residue cysteine 195 is the Glycyl thioester intermediate; for adenylyltransferase activity of the active site. Zn(2+) is bound by residues cysteine 253 and cysteine 256. The Rhodanese domain maps to alanine 303–proline 400. The active-site Cysteine persulfide intermediate; for sulfurtransferase activity is cysteine 359.

It in the N-terminal section; belongs to the HesA/MoeB/ThiF family. UBA4 subfamily. Requires Zn(2+) as cofactor.

It localises to the cytoplasm. It is found in the cytosol. It catalyses the reaction [molybdopterin-synthase sulfur-carrier protein]-C-terminal Gly-Gly + ATP + H(+) = [molybdopterin-synthase sulfur-carrier protein]-C-terminal Gly-Gly-AMP + diphosphate. The catalysed reaction is [molybdopterin-synthase sulfur-carrier protein]-C-terminal Gly-Gly-AMP + S-sulfanyl-L-cysteinyl-[cysteine desulfurase] + AH2 = [molybdopterin-synthase sulfur-carrier protein]-C-terminal-Gly-aminoethanethioate + L-cysteinyl-[cysteine desulfurase] + A + AMP + 2 H(+). Its pathway is tRNA modification; 5-methoxycarbonylmethyl-2-thiouridine-tRNA biosynthesis. It functions in the pathway cofactor biosynthesis; molybdopterin biosynthesis. In terms of biological role, plays a central role in 2-thiolation of mcm(5)S(2)U at tRNA wobble positions of cytosolic tRNA(Lys), tRNA(Glu) and tRNA(Gln). Also essential during biosynthesis of the molybdenum cofactor. Acts by mediating the C-terminal thiocarboxylation of sulfur carriers URM1 and MOCS2A. Its N-terminus first activates URM1 and MOCS2A as acyl-adenylates (-COAMP), then the persulfide sulfur on the catalytic cysteine is transferred to URM1 and MOCS2A to form thiocarboxylation (-COSH) of their C-terminus. The reaction probably involves hydrogen sulfide that is generated from the persulfide intermediate and that acts as a nucleophile towards URM1 and MOCS2A. Subsequently, a transient disulfide bond is formed. Does not use thiosulfate as sulfur donor; NFS1 probably acting as a sulfur donor for thiocarboxylation reactions. In Caenorhabditis briggsae, this protein is Adenylyltransferase and sulfurtransferase MOCS3.